The sequence spans 312 residues: MKREIAVGTRVSKLAMWQARWVVDRLKELCPGCSFRIVGIRTLGDRILDAALVKIGDKGLFTKELEAAMLRGEIDMAVHSMKDLPTELPEGLVIGAVCKREHPADVLVSRRGKKLDELPGGALVGTSSLRRCAQLLWYRDDLRMVNLRGNINTRLRKLEEENLDAAVLAYAGLFRMGRQDAITQVIPFDICLPAVGQGSIGVEVRSDDGEVLELVKKIDHRESRLAVFAERAFLRRLEGGCQVPVGALGTVENDRLRLEGVVATPDGKQLVRSFVEGNGGDAAAIGLRLAEKLLELGAGEILKRARQEERRE.

C241 is subject to S-(dipyrrolylmethanemethyl)cysteine.

Belongs to the HMBS family. In terms of assembly, monomer. Requires dipyrromethane as cofactor.

The enzyme catalyses 4 porphobilinogen + H2O = hydroxymethylbilane + 4 NH4(+). It functions in the pathway porphyrin-containing compound metabolism; protoporphyrin-IX biosynthesis; coproporphyrinogen-III from 5-aminolevulinate: step 2/4. In terms of biological role, tetrapolymerization of the monopyrrole PBG into the hydroxymethylbilane pre-uroporphyrinogen in several discrete steps. This Pelotomaculum thermopropionicum (strain DSM 13744 / JCM 10971 / SI) protein is Porphobilinogen deaminase.